Reading from the N-terminus, the 340-residue chain is Guanine nucleotide-binding protein G(I)/G(S)/G(T) subunit beta-3 (340 aa).

WD repeat units lie at residues 53-83 (GHLA…IVWD), 95-125 (LRSS…SIYS), 141-170 (AHTG…ALWD), 182-212 (GHTG…KLWD), 224-254 (GHES…RLFD), 268-298 (SIIC…NVWD), and 310-340 (GHDN…KIWN).

It belongs to the WD repeat G protein beta family. As to quaternary structure, g proteins are composed of 3 units, alpha, beta and gamma. Interacts with RASD2. As to expression, expressed at a high level in the heart and at a much lower level in the brain.

Its function is as follows. Guanine nucleotide-binding proteins (G proteins) are involved as a modulator or transducer in various transmembrane signaling systems. The beta and gamma chains are required for the GTPase activity, for replacement of GDP by GTP, and for G protein-effector interaction. The polypeptide is Guanine nucleotide-binding protein G(I)/G(S)/G(T) subunit beta-3 (Gnb3) (Rattus norvegicus (Rat)).